The following is a 405-amino-acid chain: 3-isopropylmalate dehydrogenase 2, chloroplastic (405 aa).

A chloroplast-targeting transit peptide spans 1-33; that stretch reads MAAALQTNIRTVKVPATFRAVSKQSLAPFRVRC. Position 70 is a phosphoserine (S70). 114 to 129 provides a ligand contact to NAD(+); it reads IGGYKWDNNEKHLRPE. 3 residues coordinate substrate: R136, R146, and R174. N234 serves as a coordination point for NAD(+). Residue D264 participates in substrate binding. Residue D264 participates in Mg(2+) binding. NAD(+) is bound at residue N265. D288 and D292 together coordinate Mg(2+). 318–334 is a binding site for NAD(+); the sequence is EPIHGSAPDIAGQDKAN.

It belongs to the isocitrate and isopropylmalate dehydrogenases family. Homodimer. Requires Mg(2+) as cofactor. The cofactor is Mn(2+). As to expression, expressed at low levels in seedlings, cotyledons, hypocotyls, flowers, roots, pollen, leaves and stems.

The protein resides in the plastid. Its subcellular location is the chloroplast stroma. The catalysed reaction is (2R,3S)-3-isopropylmalate + NAD(+) = 4-methyl-2-oxopentanoate + CO2 + NADH. It participates in amino-acid biosynthesis; L-leucine biosynthesis; L-leucine from 3-methyl-2-oxobutanoate: step 3/4. With respect to regulation, regulated by a thiol-based redox modification. Functionally, involved in leucine biosynthesis; catalyzes the oxidative decarboxylation step in leucine biosynthesis (primary metabolism). Catalyzes the oxidation of 3-carboxy-2-hydroxy-4-methylpentanoate (3-isopropylmalate, 3-IPM) to 3-carboxy-4-methyl-2-oxopentanoate. The product decarboxylates to 4-methyl-2 oxopentanoate. Required during pollen development and involved in embryo sac development. The chain is 3-isopropylmalate dehydrogenase 2, chloroplastic from Arabidopsis thaliana (Mouse-ear cress).